Consider the following 370-residue polypeptide: Uroporphyrinogen decarboxylase (370 aa).

Residues 29–33, D79, Y155, S210, and H342 each bind substrate; that span reads RQAGR.

This sequence belongs to the uroporphyrinogen decarboxylase family. As to quaternary structure, homodimer.

Its subcellular location is the cytoplasm. The enzyme catalyses uroporphyrinogen III + 4 H(+) = coproporphyrinogen III + 4 CO2. The protein operates within porphyrin-containing compound metabolism; protoporphyrin-IX biosynthesis; coproporphyrinogen-III from 5-aminolevulinate: step 4/4. Its function is as follows. Catalyzes the decarboxylation of four acetate groups of uroporphyrinogen-III to yield coproporphyrinogen-III. This is Uroporphyrinogen decarboxylase from Verminephrobacter eiseniae (strain EF01-2).